Consider the following 264-residue polypeptide: Elongation factor Ts (264 aa).

The interval 76 to 79 (TDFV) is involved in Mg(2+) ion dislocation from EF-Tu.

This sequence belongs to the EF-Ts family.

It localises to the cytoplasm. Associates with the EF-Tu.GDP complex and induces the exchange of GDP to GTP. It remains bound to the aminoacyl-tRNA.EF-Tu.GTP complex up to the GTP hydrolysis stage on the ribosome. This is Elongation factor Ts from Deinococcus radiodurans (strain ATCC 13939 / DSM 20539 / JCM 16871 / CCUG 27074 / LMG 4051 / NBRC 15346 / NCIMB 9279 / VKM B-1422 / R1).